The sequence spans 358 residues: Leukotriene B4 receptor 2 (358 aa).

Over 1 to 24 the chain is Extracellular; sequence MSVCYRPPGNETLLSWKTSRATGT. An N-linked (GlcNAc...) asparagine glycan is attached at asparagine 10. A helical membrane pass occupies residues 25–45; sequence AFLLLAALLGLPGNGFVVWSL. Residues 46–60 lie on the Cytoplasmic side of the membrane; that stretch reads AGWRPARGRPLAATL. The chain crosses the membrane as a helical span at residues 61-81; that stretch reads VLHLALADGAVLLLTPLFVAF. Residues 82-96 are Extracellular-facing; the sequence is LTRQAWPLGQAGCKA. A helical transmembrane segment spans residues 97-117; sequence VYYVCALSMYASVLLTGLLSL. The Cytoplasmic segment spans residues 118-140; sequence QRCLAVTRPFLAPRLRSPALARR. The helical transmembrane segment at 141 to 161 threads the bilayer; sequence LLLAVWLAALLLAVPAAVYRH. Over 162-185 the chain is Extracellular; sequence LWRDRVCQLCHPSPVHAAAHLSLE. A helical membrane pass occupies residues 186–206; that stretch reads TLTAFVLPFGLMLGCYSVTLA. At 207-224 the chain is on the cytoplasmic side; that stretch reads RLRGARWGSGRHGARVGR. Residues 225–245 form a helical membrane-spanning segment; the sequence is LVSAIVLAFGLLWAPYHAVNL. Residues 246-275 are Extracellular-facing; sequence LQAVAALAPPEGALAKLGGAGQAARAGTTA. The chain crosses the membrane as a helical span at residues 276 to 296; that stretch reads LAFFSSSVNPVLYVFTAGDLL. The Cytoplasmic portion of the chain corresponds to 297–358; the sequence is PRAGPRFLTR…MEKDGPEWDL (62 aa). The interval 311 to 358 is disordered; the sequence is SGEARGGGRSREGTMELRTTPQLKVVGQGRGNGDPGGGMEKDGPEWDL. Positions 338 to 348 are enriched in gly residues; that stretch reads QGRGNGDPGGG. The span at 349-358 shows a compositional bias: basic and acidic residues; sequence MEKDGPEWDL.

This sequence belongs to the G-protein coupled receptor 1 family. Widely expressed.

The protein localises to the cell membrane. Its function is as follows. Low-affinity receptor for leukotrienes including leukotriene B4. Mediates chemotaxis of granulocytes and macrophages. The response is mediated via G-proteins that activate a phosphatidylinositol-calcium second messenger system. The rank order of affinities for the leukotrienes is LTB4 &gt; 12-epi-LTB4 &gt; LTB5 &gt; LTB3. This is Leukotriene B4 receptor 2 (LTB4R2) from Homo sapiens (Human).